Consider the following 555-residue polypeptide: O-fucosyltransferase 20 (555 aa).

Over 1-58 (MALPKNGGNSSSTKKKVSYISVPSQIINSLSSSSLQSLLVSPKKSSRCTNRFSYRNPR) the chain is Cytoplasmic. The helical; Signal-anchor for type II membrane protein transmembrane segment at 59 to 79 (IWFLTLFLVSLFGMLKLGLNV) threads the bilayer. The Lumenal portion of the chain corresponds to 80–555 (DPISLPFSRY…MCSDRRQQQQ (476 aa)). Positions 110–130 (KNDTQSSSSSEHRKNETLPTE) are disordered. Residues N111 and N124 are each glycosylated (N-linked (GlcNAc...) asparagine). Residue 330-332 (HLR) participates in substrate binding. N-linked (GlcNAc...) asparagine glycosylation is found at N371 and N503. A disordered region spans residues 525–555 (QPELRTGRGGKDVTKHPVSECMCSDRRQQQQ). Positions 529 to 555 (RTGRGGKDVTKHPVSECMCSDRRQQQQ) are enriched in basic and acidic residues.

The protein belongs to the glycosyltransferase GT106 family. In terms of tissue distribution, highly expressed in embryogenic microspore and in vegetative tissues.

It localises to the golgi apparatus membrane. The protein operates within glycan metabolism. Its function is as follows. May play a role in the biosynthesis of matrix polysaccharides and contribute to the biomechanics and development of the plant cell wall. The polypeptide is O-fucosyltransferase 20 (Brassica napus (Rape)).